The sequence spans 144 residues: Eukaryotic translation initiation factor 1A, X-chromosomal (144 aa).

Positions 1–15 are enriched in basic residues; it reads MPKNKGKGGKNRRRG. Disordered stretches follow at residues 1 to 26 and 114 to 144; these read MPKN…KREL and KINE…IDDI. Residues 16–26 show a composition bias toward basic and acidic residues; the sequence is KNENESEKREL. One can recognise an S1-like domain in the interval 22–96; sequence EKRELVFKED…NKADVILKYN (75 aa). The segment covering 124-144 has biased composition (acidic residues); it reads GDDDEIQFDDIGDDDEDIDDI.

The protein belongs to the eIF-1A family. As to quaternary structure, component of the 43S pre-initiation complex (43S PIC), which is composed of the 40S ribosomal subunit, EIF1, eIF1A (EIF1AX), eIF3 complex, EIF5 and eIF2-GTP-initiator tRNA complex (eIF2 ternary complex). Interacts with EIF5; this interaction contributes to the maintenance of EIF1 within the open 43S PIC. Interacts through its C-terminal domain (CTD) with the CTD of EIF5B; from the location of the start codon by the 43S complex until the formation of the 80S complex. (Microbial infection) Interacts with human respiratory syncytial virus (HRSV) nucleoprotein; this interaction recruits EIF1AX to the viral replication complex to facilitate viral genomic RNA synthesis and virus production.

The protein localises to the cytoplasm. Its function is as follows. Component of the 43S pre-initiation complex (43S PIC), which binds to the mRNA cap-proximal region, scans mRNA 5'-untranslated region, and locates the initiation codon. This protein enhances formation of the cap-proximal complex. Together with EIF1, facilitates scanning, start codon recognition, promotion of the assembly of 48S complex at the initiation codon (43S PIC becomes 48S PIC after the start codon is reached), and dissociation of aberrant complexes. After start codon location, together with EIF5B orients the initiator methionine-tRNA in a conformation that allows 60S ribosomal subunit joining to form the 80S initiation complex. Is released after 80S initiation complex formation, just after GTP hydrolysis by EIF5B, and before release of EIF5B. Its globular part is located in the A site of the 40S ribosomal subunit. Its interaction with EIF5 during scanning contribute to the maintenance of EIF1 within the open 43S PIC. In contrast to yeast orthologs, does not bind EIF1. In Homo sapiens (Human), this protein is Eukaryotic translation initiation factor 1A, X-chromosomal (EIF1AX).